We begin with the raw amino-acid sequence, 413 residues long: Tyrosine--tRNA ligase (413 aa).

An L-tyrosine-binding site is contributed by Tyr-34. Residues 39-48 carry the 'HIGH' region motif; it reads CTAQSLHVGN. 2 residues coordinate L-tyrosine: Tyr-171 and Gln-175. Residues 231-235 carry the 'KMSKS' region motif; it reads KMGKT. ATP is bound at residue Lys-234. The S4 RNA-binding domain occupies 346–411; that stretch reads IPITELLVTI…GKKCHILVKI (66 aa).

This sequence belongs to the class-I aminoacyl-tRNA synthetase family. TyrS type 1 subfamily. Homodimer.

The protein resides in the cytoplasm. It catalyses the reaction tRNA(Tyr) + L-tyrosine + ATP = L-tyrosyl-tRNA(Tyr) + AMP + diphosphate + H(+). Functionally, catalyzes the attachment of tyrosine to tRNA(Tyr) in a two-step reaction: tyrosine is first activated by ATP to form Tyr-AMP and then transferred to the acceptor end of tRNA(Tyr). This is Tyrosine--tRNA ligase from Orientia tsutsugamushi (strain Boryong) (Rickettsia tsutsugamushi).